We begin with the raw amino-acid sequence, 341 residues long: NADH-quinone oxidoreductase subunit H 1 (341 aa).

8 helical membrane-spanning segments follow: residues 13–33 (LVVI…IAYI), 82–102 (GLFL…WAVI), 115–135 (VGVL…IMAG), 161–181 (IGFV…TAIV), 190–210 (MLGW…VSAL), 248–268 (YVAI…GWLP), 277–297 (WVPG…LFAM), and 313–333 (LGWK…ASVL).

The protein belongs to the complex I subunit 1 family. NDH-1 is composed of 14 different subunits. Subunits NuoA, H, J, K, L, M, N constitute the membrane sector of the complex.

It localises to the cell inner membrane. It carries out the reaction a quinone + NADH + 5 H(+)(in) = a quinol + NAD(+) + 4 H(+)(out). Its function is as follows. NDH-1 shuttles electrons from NADH, via FMN and iron-sulfur (Fe-S) centers, to quinones in the respiratory chain. The immediate electron acceptor for the enzyme in this species is believed to be ubiquinone. Couples the redox reaction to proton translocation (for every two electrons transferred, four hydrogen ions are translocated across the cytoplasmic membrane), and thus conserves the redox energy in a proton gradient. This subunit may bind ubiquinone. This is NADH-quinone oxidoreductase subunit H 1 from Rhodopseudomonas palustris (strain ATCC BAA-98 / CGA009).